Consider the following 187-residue polypeptide: Protein Flattop (187 aa).

The segment at threonine 97–glutamine 187 is disordered. Over residues glutamate 122–threonine 131 the composition is skewed to polar residues. The span at lysine 169–glutamine 187 shows a compositional bias: basic and acidic residues.

This sequence belongs to the Flattop family.

The protein localises to the cytoplasm. It is found in the cytoskeleton. It localises to the cilium basal body. Its subcellular location is the cell projection. The protein resides in the cilium. The protein localises to the apical cell membrane. It is found in the cilium axoneme. In terms of biological role, microtubule inner protein (MIP) part of the dynein-decorated doublet microtubules (DMTs) in cilia axoneme. Acts as a regulator of cilium basal body docking and positioning in mono- and multiciliated cells. Regulates basal body docking and cilia formation in multiciliated lung cells. Regulates kinocilium positioning and stereocilia bundle morphogenesis in the inner ear. This is Protein Flattop from Salmo salar (Atlantic salmon).